We begin with the raw amino-acid sequence, 235 residues long: Protein LIFEGUARD 1 (235 aa).

The next 7 membrane-spanning stretches (helical) occupy residues 33–53 (YSIL…VYFV), 67–87 (LAVF…LLAF), 95–115 (CIVL…CCSL), 120–140 (IVLE…IYTF), 149–169 (FSFL…FTLL), 178–198 (LSSM…IIFD), and 212–232 (ITAA…LLGI).

The protein belongs to the BI1 family. In terms of tissue distribution, expressed at very low in leaves.

The protein resides in the membrane. Its function is as follows. (Microbial infection) Facilitates the development of the powdery mildew fungus E.cruciferarum. Functionally, (Microbial infection) May prevent cell death upon A.alternata f.sp. lycopersici (AAL) toxin treatment. This is Protein LIFEGUARD 1 from Arabidopsis thaliana (Mouse-ear cress).